The chain runs to 77 residues: Acyl carrier protein (77 aa).

Residues 2–77 (ADVMERVTKI…DVVDYINNNQ (76 aa)) form the Carrier domain. Serine 37 bears the O-(pantetheine 4'-phosphoryl)serine mark.

Belongs to the acyl carrier protein (ACP) family. In terms of processing, 4'-phosphopantetheine is transferred from CoA to a specific serine of apo-ACP by AcpS. This modification is essential for activity because fatty acids are bound in thioester linkage to the sulfhydryl of the prosthetic group.

The protein resides in the cytoplasm. It participates in lipid metabolism; fatty acid biosynthesis. Functionally, carrier of the growing fatty acid chain in fatty acid biosynthesis. This Shouchella clausii (strain KSM-K16) (Alkalihalobacillus clausii) protein is Acyl carrier protein.